A 1177-amino-acid chain; its full sequence is DNA-directed RNA polymerase subunit beta (1177 aa).

The segment covering aspartate 1147–aspartate 1161 has biased composition (acidic residues). Residues aspartate 1147–glutamate 1177 are disordered. Over residues histidine 1162–glutamate 1177 the composition is skewed to basic and acidic residues.

The protein belongs to the RNA polymerase beta chain family. As to quaternary structure, the RNAP catalytic core consists of 2 alpha, 1 beta, 1 beta' and 1 omega subunit. When a sigma factor is associated with the core the holoenzyme is formed, which can initiate transcription.

The enzyme catalyses RNA(n) + a ribonucleoside 5'-triphosphate = RNA(n+1) + diphosphate. In terms of biological role, DNA-dependent RNA polymerase catalyzes the transcription of DNA into RNA using the four ribonucleoside triphosphates as substrates. The protein is DNA-directed RNA polymerase subunit beta of Bacillus thuringiensis (strain Al Hakam).